The sequence spans 602 residues: Threonine--tRNA ligase (602 aa).

Residues 208–499 are catalytic; sequence DHRKLGIELK…LTEHCAGEFP (292 aa). The Zn(2+) site is built by cysteine 300, histidine 351, and histidine 476.

This sequence belongs to the class-II aminoacyl-tRNA synthetase family. In terms of assembly, homodimer. The cofactor is Zn(2+).

It is found in the cytoplasm. It carries out the reaction tRNA(Thr) + L-threonine + ATP = L-threonyl-tRNA(Thr) + AMP + diphosphate + H(+). In terms of biological role, catalyzes the attachment of threonine to tRNA(Thr) in a two-step reaction: L-threonine is first activated by ATP to form Thr-AMP and then transferred to the acceptor end of tRNA(Thr). Also edits incorrectly charged L-seryl-tRNA(Thr). The sequence is that of Threonine--tRNA ligase from Campylobacter jejuni subsp. doylei (strain ATCC BAA-1458 / RM4099 / 269.97).